Consider the following 117-residue polypeptide: Ribosome-binding factor A (117 aa).

This sequence belongs to the RbfA family. In terms of assembly, monomer. Binds 30S ribosomal subunits, but not 50S ribosomal subunits or 70S ribosomes.

It is found in the cytoplasm. Functionally, one of several proteins that assist in the late maturation steps of the functional core of the 30S ribosomal subunit. Associates with free 30S ribosomal subunits (but not with 30S subunits that are part of 70S ribosomes or polysomes). Required for efficient processing of 16S rRNA. May interact with the 5'-terminal helix region of 16S rRNA. This chain is Ribosome-binding factor A, found in Syntrophobacter fumaroxidans (strain DSM 10017 / MPOB).